We begin with the raw amino-acid sequence, 506 residues long: Glucan endo-1,3-beta-glucosidase 13 (506 aa).

The first 22 residues, 1 to 22 (MARDFKLIFSISILLLLLDCCY), serve as a signal peptide directing secretion. The N-linked (GlcNAc...) asparagine glycan is linked to N70. The Proton donor role is filled by E119. Residues N127, N175, and N212 are each glycosylated (N-linked (GlcNAc...) asparagine). The active-site Nucleophile is the E264. N-linked (GlcNAc...) asparagine glycosylation is found at N356 and N361. C370 and C433 are joined by a disulfide. N-linked (GlcNAc...) asparagine glycans are attached at residues N459 and N465. S471 carries the GPI-anchor amidated serine lipid modification. Positions 472-506 (SASTPRGNELLQWILKLCLMISLFFSLQTMNSQAL) are cleaved as a propeptide — removed in mature form.

This sequence belongs to the glycosyl hydrolase 17 family. In terms of processing, contains two additional disulfide bonds.

The protein resides in the secreted. It localises to the cell wall. Its subcellular location is the cell membrane. It catalyses the reaction Hydrolysis of (1-&gt;3)-beta-D-glucosidic linkages in (1-&gt;3)-beta-D-glucans.. The polypeptide is Glucan endo-1,3-beta-glucosidase 13 (Arabidopsis thaliana (Mouse-ear cress)).